The following is a 419-amino-acid chain: Methyltransferase/ribosomally synthesized type I borosin cyclic peptide precursor gjuMa (419 aa).

The segment at 1–255 is methyltransferase domain; it reads MATPIATTTN…AISTLYVPPR (255 aa). Catalysis depends on residues Arg79, Tyr83, and Tyr105. Tyr105, His107, Val110, Ala137, Gln179, Gly217, Ser248, and Thr249 together coordinate S-adenosyl-L-methionine. The clasp domain stretch occupies residues 256–381; it reads DISPVDPTMA…GAVYALMSRP (126 aa). The segment at 382-404 is precursor leader; the sequence is TGDIAREKELTNDEIANNHGAPY. Position 408 is an N-methylserine (Ser408). Ala409 is subject to N-methylalanine. Val410 is modified (N-methylvaline). N-methylisoleucine occurs at positions 411 and 412. An N-methylalanine mark is found at Ala413 and Ala414. N-methylisoleucine occurs at positions 415 and 416.

It in the N-terminal section; belongs to the precorrin methyltransferase family. In terms of assembly, homodimer. Post-translationally, gjuMA automethylates at Ser-408, Ala-409, Val-410, Ile-411, Ile-412, Ala-413, Ala-414, Ile-415 and Ile-416 before being processed by ae prolyloligopeptidase which likely forms a peptidyl ester upon removal of the follower propeptide, which then undergoes macrocyclization with the N-terminus of the modified core peptide. Peptide backbone alpha-N-methylations change the physicochemical properties of amide bonds to provide structural constraints and other favorable characteristics including biological membrane permeability to peptides.

It functions in the pathway secondary metabolite biosynthesis. Functionally, fusion protein of the methyltransferase gjuM and the type I borosin core peptide; part of the gene cluster that mediates the biosynthesis of a type I borosin, a highly methylated cyclic peptide with potent biological activities. Type I borosins derive from the C-terminus of the fusion protein, and it is the same protein that methylates its own C-terminus using S-adenosyl methionine (SAM). The C-terminus is subsequently cleaved off and macrocyclized by a prolyloligopeptidase to give the final product. This chain is Methyltransferase/ribosomally synthesized type I borosin cyclic peptide precursor gjuMa, found in Gymnopilus junonius (Spectacular rustgill mushroom).